The sequence spans 355 residues: DNA-directed RNA polymerase subunit alpha (355 aa).

The tract at residues 1 to 248 is alpha N-terminal domain (alpha-NTD); sequence MYYNNDVSLC…EQLQPFISSD (248 aa). Residues 267–355 are alpha C-terminal domain (alpha-CTD); the sequence is YDPVLLRKVD…ELAKQHTDED (89 aa).

It belongs to the RNA polymerase alpha chain family. Homodimer. The RNAP catalytic core consists of 2 alpha, 1 beta, 1 beta' and 1 omega subunit. When a sigma factor is associated with the core the holoenzyme is formed, which can initiate transcription.

It carries out the reaction RNA(n) + a ribonucleoside 5'-triphosphate = RNA(n+1) + diphosphate. Its function is as follows. DNA-dependent RNA polymerase catalyzes the transcription of DNA into RNA using the four ribonucleoside triphosphates as substrates. The chain is DNA-directed RNA polymerase subunit alpha from Wolbachia pipientis wMel.